The following is a 297-amino-acid chain: Guanylate kinase (297 aa).

The Guanylate kinase-like domain occupies 4 to 183 (GKMIIISGPS…AVAKITDVLH (180 aa)). Position 11-18 (11-18 (GPSGVGKG)) interacts with ATP. Positions 204-297 (EQIVKEKYMY…EQKHYNNDEF (94 aa)) are unknown.

It belongs to the guanylate kinase family.

Its subcellular location is the cytoplasm. It carries out the reaction GMP + ATP = GDP + ADP. Essential for recycling GMP and indirectly, cGMP. The polypeptide is Guanylate kinase (gmk) (Mycoplasma capricolum subsp. capricolum (strain California kid / ATCC 27343 / NCTC 10154)).